The sequence spans 181 residues: Probable GTP-binding protein EngB (181 aa).

The 164-residue stretch at 18–181 (PKNEICFVGR…LQDLVNNLFN (164 aa)) folds into the EngB-type G domain. GTP-binding positions include 26 to 33 (GRSNVGKS), 52 to 56 (GKTKL), 70 to 73 (DLPG), 137 to 140 (TKRD), and 164 to 166 (VSI). Residues Ser33 and Thr54 each coordinate Mg(2+).

Belongs to the TRAFAC class TrmE-Era-EngA-EngB-Septin-like GTPase superfamily. EngB GTPase family. Mg(2+) serves as cofactor.

In terms of biological role, necessary for normal cell division and for the maintenance of normal septation. In Mycoplasma mobile (strain ATCC 43663 / 163K / NCTC 11711) (Mesomycoplasma mobile), this protein is Probable GTP-binding protein EngB.